Here is an 834-residue protein sequence, read N- to C-terminus: Inner nuclear membrane protein SRC1 (834 aa).

A disordered region spans residues 68–292 (DEGIVKMDRP…TANGTGHSTP (225 aa)). Over residues 77-86 (PSSSPSIASP) the composition is skewed to low complexity. A phosphoserine mark is found at Ser-78, Ser-80, and Ser-85. Acidic residues-rich tracts occupy residues 114-127 (VSNDDDDDDDDDDD) and 142-153 (DTDEVDDEEDDV). The segment covering 154 to 170 (ITSSSNKSDTNDFQQNS) has biased composition (polar residues). Ser-181 is modified (phosphoserine). Residues 188-198 (NSKENKIDNKH) are compositionally biased toward basic and acidic residues. Ser-203, Ser-204, and Ser-206 each carry phosphoserine. Positions 243–266 (IKNTNRKPVSMDNFNDSLTSSGTE) are enriched in polar residues. Ser-301 carries the phosphoserine modification. The tract at residues 307–364 (PQKEVPSTILVPEVEQQEPSQSERTPSLFSSEGSGSESEAPLLPEITTPGPHQPMGNT) is disordered. Composition is skewed to low complexity over residues 317-329 (VPEVEQQEPSQSE) and 336-345 (SSEGSGSESE). Thr-394 is subject to Phosphothreonine. A Phosphoserine modification is found at Ser-427. 2 consecutive transmembrane segments (helical) span residues 455 to 475 (LLALFLFCIFIVIPLLFGLWY) and 708 to 728 (IWLMFLLIVISKVIEIKLKNY).

The protein localises to the nucleus inner membrane. Its function is as follows. Plays a role in sister chromatid separation. The polypeptide is Inner nuclear membrane protein SRC1 (SRC1) (Saccharomyces cerevisiae (strain ATCC 204508 / S288c) (Baker's yeast)).